We begin with the raw amino-acid sequence, 456 residues long: Kynurenine 3-monooxygenase (456 aa).

The protein belongs to the aromatic-ring hydroxylase family. KMO subfamily. Requires FAD as cofactor.

The protein localises to the mitochondrion outer membrane. The enzyme catalyses L-kynurenine + NADPH + O2 + H(+) = 3-hydroxy-L-kynurenine + NADP(+) + H2O. It functions in the pathway cofactor biosynthesis; NAD(+) biosynthesis; quinolinate from L-kynurenine: step 1/3. Functionally, catalyzes the hydroxylation of L-kynurenine (L-Kyn) to form 3-hydroxy-L-kynurenine (L-3OHKyn). Required for synthesis of quinolinic acid. The sequence is that of Kynurenine 3-monooxygenase from Candida albicans (strain SC5314 / ATCC MYA-2876) (Yeast).